The sequence spans 699 residues: uncharacterized protein (699 aa).

Disordered stretches follow at residues 175 to 208 (PTLGVSEFPSKHGDHSDSKTYESPISNSQAASLS), 289 to 364 (PTAK…EEPD), and 539 to 603 (RAKE…KEYL). Over residues 183–194 (PSKHGDHSDSKT) the composition is skewed to basic and acidic residues. Polar residues predominate over residues 195–208 (YESPISNSQAASLS). The segment covering 308 to 322 (SKHKKRPKRLSKFKQ) has biased composition (basic residues). The span at 323–338 (AKLETKKSGNKDHATS) shows a compositional bias: basic and acidic residues. 2 stretches are compositionally biased toward polar residues: residues 339–360 (SEKLSLGNESIHSINETRSSSI) and 548–573 (HSNATCTIKNDDLSNTLNNRAANTKL). Residues 574 to 603 (NPKEEDKSTVESELKAPPKEKSSETSKEYL) show a composition bias toward basic and acidic residues.

Its subcellular location is the cytoplasm. This is an uncharacterized protein from Schizosaccharomyces pombe (strain 972 / ATCC 24843) (Fission yeast).